We begin with the raw amino-acid sequence, 428 residues long: Transcription factor bHLH91 (428 aa).

Residues 210 to 259 enclose the bHLH domain; that stretch reads KRKNKPFTTERERRCHLNERYEALKLLIPSPSKGDRASILQDGIDYINEL. Residues 278 to 320 form a disordered region; sequence RHKNNEVDDNNNNKNLDDHGNEDDDDDDENMEKKPESDVIDQC. A compositionally biased stretch (acidic residues) spans 297–307; sequence GNEDDDDDDEN.

Homodimer. As to expression, flowers.

The protein localises to the nucleus. This chain is Transcription factor bHLH91 (BHLH91), found in Arabidopsis thaliana (Mouse-ear cress).